The chain runs to 502 residues: Probable cobyric acid synthase (502 aa).

One can recognise a GATase cobBQ-type domain in the interval 250 to 448; the sequence is KITIGTLRLP…FHGIFHNFEF (199 aa). Cys330 serves as the catalytic Nucleophile. His440 is a catalytic residue.

It belongs to the CobB/CobQ family. CobQ subfamily.

Its pathway is cofactor biosynthesis; adenosylcobalamin biosynthesis. Functionally, catalyzes amidations at positions B, D, E, and G on adenosylcobyrinic A,C-diamide. NH(2) groups are provided by glutamine, and one molecule of ATP is hydrogenolyzed for each amidation. In Methanosphaera stadtmanae (strain ATCC 43021 / DSM 3091 / JCM 11832 / MCB-3), this protein is Probable cobyric acid synthase.